The primary structure comprises 177 residues: T-cell receptor beta chain C region (177 aa).

A c region region spans residues 1–150; sequence EDLANVSAPQ…GVLSATVLYE (150 aa). N-linked (GlcNAc...) asparagine glycosylation is found at asparagine 5 and asparagine 22. Cysteine 31 and cysteine 96 are oxidised to a cystine. The chain crosses the membrane as a helical span at residues 146-168; the sequence is TVLYEILLGKATLYAVLVSALVL. Topologically, residues 169-177 are cytoplasmic; sequence MAMVKRKDS.

The protein localises to the membrane. In Oryctolagus cuniculus (Rabbit), this protein is T-cell receptor beta chain C region.